A 197-amino-acid chain; its full sequence is Phosphoheptose isomerase (197 aa).

An SIS domain is found at 36 to 197 (MVNALLNEGK…IDSQLFGSEE (162 aa)). 51-53 (NGG) contacts substrate. Residues histidine 60 and glutamate 64 each contribute to the Zn(2+) site. Residues glutamate 64, 93-94 (ND), 119-121 (STS), serine 124, and glutamine 174 contribute to the substrate site. Zn(2+) is bound by residues glutamine 174 and histidine 182.

It belongs to the SIS family. GmhA subfamily. As to quaternary structure, homotetramer. Zn(2+) serves as cofactor.

It is found in the cytoplasm. The catalysed reaction is 2 D-sedoheptulose 7-phosphate = D-glycero-alpha-D-manno-heptose 7-phosphate + D-glycero-beta-D-manno-heptose 7-phosphate. Its pathway is carbohydrate biosynthesis; D-glycero-D-manno-heptose 7-phosphate biosynthesis; D-glycero-alpha-D-manno-heptose 7-phosphate and D-glycero-beta-D-manno-heptose 7-phosphate from sedoheptulose 7-phosphate: step 1/1. In terms of biological role, catalyzes the isomerization of sedoheptulose 7-phosphate in D-glycero-D-manno-heptose 7-phosphate. The protein is Phosphoheptose isomerase of Pseudomonas putida (strain GB-1).